We begin with the raw amino-acid sequence, 145 residues long: Superoxide dismutase [Mn/Fe] (145 aa).

Fe(3+)-binding residues include histidine 10 and histidine 64. Histidine 10 and histidine 64 together coordinate Mn(2+).

It belongs to the iron/manganese superoxide dismutase family. It depends on Mn(2+) as a cofactor. Fe(3+) is required as a cofactor.

The enzyme catalyses 2 superoxide + 2 H(+) = H2O2 + O2. Its function is as follows. Destroys superoxide anion radicals which are normally produced within the cells and which are toxic to biological systems. Catalyzes the dismutation of superoxide anion radicals into O2 and H2O2 by successive reduction and oxidation of the transition metal ion at the active site. The protein is Superoxide dismutase [Mn/Fe] (sodA) of Streptococcus salivarius.